A 308-amino-acid polypeptide reads, in one-letter code: Putative proline iminopeptidase (308 aa).

The AB hydrolase-1 domain occupies 30–290 (KPVLYIHGGP…LYVTNNAGHS (261 aa)). Catalysis depends on serine 105, which acts as the Nucleophile. Aspartate 261 is a catalytic residue. Histidine 289 acts as the Proton donor in catalysis.

Belongs to the peptidase S33 family.

The protein resides in the cytoplasm. It catalyses the reaction Release of N-terminal proline from a peptide.. Functionally, specifically catalyzes the removal of N-terminal proline residues from peptides. This chain is Putative proline iminopeptidase (pip), found in Mycoplasma genitalium (strain ATCC 33530 / DSM 19775 / NCTC 10195 / G37) (Mycoplasmoides genitalium).